The sequence spans 218 residues: Small ribosomal subunit protein uS3c (218 aa).

Residues 43–118 form the KH type-2 domain; sequence IKNYVQKNTR…KLNIAITRIG (76 aa).

It belongs to the universal ribosomal protein uS3 family. As to quaternary structure, part of the 30S ribosomal subunit.

Its subcellular location is the plastid. The protein localises to the chloroplast. The sequence is that of Small ribosomal subunit protein uS3c (rps3) from Gossypium barbadense (Sea Island cotton).